The sequence spans 201 residues: Small ribosomal subunit protein uS4c (201 aa).

The S4 RNA-binding domain maps to 89–149 (MRLDNILFRL…DKPKSGALIK (61 aa)).

It belongs to the universal ribosomal protein uS4 family. Part of the 30S ribosomal subunit. Contacts protein S5. The interaction surface between S4 and S5 is involved in control of translational fidelity.

The protein localises to the plastid. One of the primary rRNA binding proteins, it binds directly to 16S rRNA where it nucleates assembly of the body of the 30S subunit. In terms of biological role, with S5 and S12 plays an important role in translational accuracy. The protein is Small ribosomal subunit protein uS4c (rps4) of Cuscuta exaltata (Tall dodder).